The sequence spans 329 residues: GTP 3',8-cyclase 1 (329 aa).

The Radical SAM core domain occupies 7-230 (GQGRQIDYLR…LDSAEQSGGP (224 aa)). GTP is bound at residue Arg-16. [4Fe-4S] cluster contacts are provided by Cys-23 and Cys-27. Residue Tyr-29 coordinates S-adenosyl-L-methionine. Cys-30 is a [4Fe-4S] cluster binding site. Residue Arg-65 coordinates GTP. Position 69 (Gly-69) interacts with S-adenosyl-L-methionine. Thr-96 contacts GTP. Ser-120 serves as a coordination point for S-adenosyl-L-methionine. Lys-157 is a GTP binding site. Position 191 (Met-191) interacts with S-adenosyl-L-methionine. Residues Cys-255 and Cys-258 each coordinate [4Fe-4S] cluster. 260-262 (RLR) contributes to the GTP binding site. Cys-272 lines the [4Fe-4S] cluster pocket.

This sequence belongs to the radical SAM superfamily. MoaA family. Monomer and homodimer. [4Fe-4S] cluster serves as cofactor.

It catalyses the reaction GTP + AH2 + S-adenosyl-L-methionine = (8S)-3',8-cyclo-7,8-dihydroguanosine 5'-triphosphate + 5'-deoxyadenosine + L-methionine + A + H(+). The protein operates within cofactor biosynthesis; molybdopterin biosynthesis. Catalyzes the cyclization of GTP to (8S)-3',8-cyclo-7,8-dihydroguanosine 5'-triphosphate. The polypeptide is GTP 3',8-cyclase 1 (moaA1) (Pseudomonas aeruginosa (strain ATCC 15692 / DSM 22644 / CIP 104116 / JCM 14847 / LMG 12228 / 1C / PRS 101 / PAO1)).